The primary structure comprises 127 residues: Gonadotropin subunit beta-1 (127 aa).

An N-terminal signal peptide occupies residues 1-22; that stretch reads MHLAVTALCLTLAPVLARASTS. Intrachain disulfides connect cysteine 23–cysteine 71, cysteine 37–cysteine 86, cysteine 40–cysteine 124, cysteine 48–cysteine 102, cysteine 52–cysteine 104, and cysteine 107–cysteine 114. N-linked (GlcNAc...) asparagine glycosylation is found at asparagine 27 and asparagine 44.

Belongs to the glycoprotein hormones subunit beta family. As to quaternary structure, heterodimer of an alpha and a beta chain.

The protein localises to the secreted. Functionally, involved in gametogenesis and steroidogenesis. This chain is Gonadotropin subunit beta-1 (cgba), found in Anguilla japonica (Japanese eel).